We begin with the raw amino-acid sequence, 325 residues long: Lipoyl synthase (325 aa).

The tract at residues 1–31 (MANLIDNTARSAASDARAARHPEKQKRADTP) is disordered. Residues 17 to 31 (RAARHPEKQKRADTP) show a composition bias toward basic and acidic residues. The [4Fe-4S] cluster site is built by Cys-65, Cys-70, Cys-76, Cys-91, Cys-95, Cys-98, and Ser-304. Residues 77–293 (WEQKHATFMI…ETIARAKGFL (217 aa)) enclose the Radical SAM core domain.

The protein belongs to the radical SAM superfamily. Lipoyl synthase family. It depends on [4Fe-4S] cluster as a cofactor.

Its subcellular location is the cytoplasm. It carries out the reaction [[Fe-S] cluster scaffold protein carrying a second [4Fe-4S](2+) cluster] + N(6)-octanoyl-L-lysyl-[protein] + 2 oxidized [2Fe-2S]-[ferredoxin] + 2 S-adenosyl-L-methionine + 4 H(+) = [[Fe-S] cluster scaffold protein] + N(6)-[(R)-dihydrolipoyl]-L-lysyl-[protein] + 4 Fe(3+) + 2 hydrogen sulfide + 2 5'-deoxyadenosine + 2 L-methionine + 2 reduced [2Fe-2S]-[ferredoxin]. It functions in the pathway protein modification; protein lipoylation via endogenous pathway; protein N(6)-(lipoyl)lysine from octanoyl-[acyl-carrier-protein]: step 2/2. Catalyzes the radical-mediated insertion of two sulfur atoms into the C-6 and C-8 positions of the octanoyl moiety bound to the lipoyl domains of lipoate-dependent enzymes, thereby converting the octanoylated domains into lipoylated derivatives. The polypeptide is Lipoyl synthase (Maricaulis maris (strain MCS10) (Caulobacter maris)).